Reading from the N-terminus, the 136-residue chain is General odorant-binding protein 57e (136 aa).

An N-terminal signal peptide occupies residues 1-20; that stretch reads MLDQLTLCLLLNFLCANVLA. 3 disulfide bridges follow: cysteine 28-cysteine 61, cysteine 57-cysteine 109, and cysteine 98-cysteine 118.

The protein belongs to the PBP/GOBP family.

Present in the aqueous fluid surrounding olfactory sensory dendrites and are thought to aid in the capture and transport of hydrophobic odorants into and through this fluid. The chain is General odorant-binding protein 57e from Drosophila melanogaster (Fruit fly).